The following is a 138-amino-acid chain: Transcription antitermination protein NusB (138 aa).

It belongs to the NusB family.

Involved in transcription antitermination. Required for transcription of ribosomal RNA (rRNA) genes. Binds specifically to the boxA antiterminator sequence of the ribosomal RNA (rrn) operons. In Coxiella burnetii (strain Dugway 5J108-111), this protein is Transcription antitermination protein NusB.